Reading from the N-terminus, the 40-residue chain is Beta-defensin 2 (40 aa).

Intrachain disulfides connect Cys7-Cys36, Cys14-Cys29, and Cys19-Cys37.

Belongs to the beta-defensin family. Neutrophilic granules.

Its subcellular location is the secreted. Its function is as follows. Has bactericidal activity. Active against E.coli ML35 and S.aureus 502A. This Bos taurus (Bovine) protein is Beta-defensin 2 (DEFB2).